The chain runs to 373 residues: Glutamate 5-kinase (373 aa).

K12 lines the ATP pocket. Substrate-binding residues include S52, D139, and N154. Residue 216–222 coordinates ATP; that stretch reads TGGMVTK. Positions 281–359 constitute a PUA domain; sequence RGSICVDDGA…QELNAVLGGN (79 aa).

The protein belongs to the glutamate 5-kinase family.

It is found in the cytoplasm. It carries out the reaction L-glutamate + ATP = L-glutamyl 5-phosphate + ADP. The protein operates within amino-acid biosynthesis; L-proline biosynthesis; L-glutamate 5-semialdehyde from L-glutamate: step 1/2. Its function is as follows. Catalyzes the transfer of a phosphate group to glutamate to form L-glutamate 5-phosphate. The protein is Glutamate 5-kinase of Dehalococcoides mccartyi (strain CBDB1).